Consider the following 246-residue polypeptide: Pyridoxine 5'-phosphate synthase (246 aa).

N12 provides a ligand contact to 3-amino-2-oxopropyl phosphate. A 1-deoxy-D-xylulose 5-phosphate-binding site is contributed by 14-15 (DH). R23 lines the 3-amino-2-oxopropyl phosphate pocket. The Proton acceptor role is filled by H48. Residues R50 and H55 each coordinate 1-deoxy-D-xylulose 5-phosphate. E75 serves as the catalytic Proton acceptor. 1-deoxy-D-xylulose 5-phosphate is bound at residue T105. Residue H196 is the Proton donor of the active site. 3-amino-2-oxopropyl phosphate-binding positions include G197 and 218 to 219 (GH).

The protein belongs to the PNP synthase family. In terms of assembly, homooctamer; tetramer of dimers.

Its subcellular location is the cytoplasm. The catalysed reaction is 3-amino-2-oxopropyl phosphate + 1-deoxy-D-xylulose 5-phosphate = pyridoxine 5'-phosphate + phosphate + 2 H2O + H(+). It functions in the pathway cofactor biosynthesis; pyridoxine 5'-phosphate biosynthesis; pyridoxine 5'-phosphate from D-erythrose 4-phosphate: step 5/5. Its function is as follows. Catalyzes the complicated ring closure reaction between the two acyclic compounds 1-deoxy-D-xylulose-5-phosphate (DXP) and 3-amino-2-oxopropyl phosphate (1-amino-acetone-3-phosphate or AAP) to form pyridoxine 5'-phosphate (PNP) and inorganic phosphate. This Pseudomonas putida (strain GB-1) protein is Pyridoxine 5'-phosphate synthase.